A 313-amino-acid polypeptide reads, in one-letter code: Probable cell division protein WhiA (313 aa).

Positions S276–K309 form a DNA-binding region, H-T-H motif.

This sequence belongs to the WhiA family.

Its function is as follows. Involved in cell division and chromosome segregation. The sequence is that of Probable cell division protein WhiA from Ruminiclostridium cellulolyticum (strain ATCC 35319 / DSM 5812 / JCM 6584 / H10) (Clostridium cellulolyticum).